Here is a 537-residue protein sequence, read N- to C-terminus: MKCNTLKLTEQDQFINKIKNSESQITSFYEYDAAKKESFYRRLKTPNNGREFHLSRVIKSYMNELKLTHQQLNNIDALADGAKVVIGGQQAGLFGGPLYTFHKIFSIITLSRQLSEEYDTPIVPVFWIAGEDHDFEEVNHTYAFNNKETTLKKVKYHTMTPPDSNVSRYTPDKNELKASLNHFFKEMKETVHTQDVYQMCVNIINQFDSWTDIFKGLIHEVFKDYGILFIDAQYPELRQMEKPLFKEILEKRNQIDQSFRETQIRKTQQQLPSMIQTETNTHLFIHEDGMRQLLNFDGTYFKLNKTEKRYTKQNLLDIIEREPERISNNVVTRPVVEEWLFNTVAFIGGPSEIKYWAELKDVFDTLNVEMPIVMPRLRITYLYARTKKLLKQYNLSIESVIANGVEQERQHFVREKASNNFINEVEEMKIQQQELYNNLFTYVENNHDNQLLLEKNNQIHLNQYDYLIKRYLLNIERENDISMRQFREISETLHPMGGLQERVWNPLQIMNDFGIDVFSPTTYPPLSYSFDHLIINP.

Residues 415-439 adopt a coiled-coil conformation; that stretch reads EKASNNFINEVEEMKIQQQELYNNL.

It belongs to the BshC family.

Involved in bacillithiol (BSH) biosynthesis. May catalyze the last step of the pathway, the addition of cysteine to glucosamine malate (GlcN-Mal) to generate BSH. The protein is Putative cysteine ligase BshC of Staphylococcus epidermidis (strain ATCC 12228 / FDA PCI 1200).